The sequence spans 194 residues: DNA replication complex GINS protein PSF3 (194 aa).

This sequence belongs to the GINS3/PSF3 family. In terms of assembly, component of the GINS complex which is a heterotetramer of SLD5, PSF1, PSF2 and PSF3.

The protein resides in the nucleus. Its function is as follows. Functions as part of the GINS complex which plays an essential role in the initiation of DNA replication by binding to DNA replication origins and facilitating the assembly of the DNA replication machinery. In Saccharomyces cerevisiae (strain ATCC 204508 / S288c) (Baker's yeast), this protein is DNA replication complex GINS protein PSF3.